The following is a 3131-amino-acid chain: Enniatin synthase (3131 aa).

Residues 53–466 (ADDKQRAVGH…VEKVDMMTQE (414 aa)) form a condensation 1 region. The interval 186-212 (NDEHPRQFETPDSSQATPEEDLQPNPS) is disordered. The segment at 495–887 (SQSPNKAAVA…GRMDSQVKIR (393 aa)) is adenylation 1. Positions 1010-1086 (SSGTDTYTKL…GLKAIVIGTS (77 aa)) constitute a Carrier 1 domain. The residue at position 1047 (serine 1047) is an O-(pantetheine 4'-phosphoryl)serine. Residues 1105-1534 (SYAQNRMWFL…ETCISVLPLT (430 aa)) form a condensation 2 region. Positions 1563-1960 (FREQAAANPE…GRMDNQFKIR (398 aa)) are adenylation 2. An S-adenosyl-L-methionine-dependent N-methyltransferase region spans residues 2021–2177 (EGWQDHFESG…YLAEVIDGLI (157 aa)). 2 Carrier domains span residues 2504 to 2578 (FPIS…RQGL) and 2598 to 2671 (APRT…ESSH). 2 positions are modified to O-(pantetheine 4'-phosphoryl)serine: serine 2538 and serine 2632. Residues 2718–3123 (QDVYPSTQMQ…RHVLEEVCKT (406 aa)) form a condensation 3 region.

This sequence belongs to the ATP-dependent AMP-binding enzyme family. The cofactor is pantetheine 4'-phosphate. The N-terminus is blocked.

Its pathway is antibiotic biosynthesis; enniatin biosynthesis. The N-methylation activity is inhibited by S-adenosyl-L-homocysteine and sinefugin. Its function is as follows. Nonribosomal peptide synthetase that synthesizes enniatin by coupling three D-hydroxycarboxylic acids and three L-amino acids via amide and ester bonds in an alternating fashion. Whereas ESYN1 can accept different amino acids as precursors (L -valine, L-isoleucine or L-leucine), only one species of D-hydroxycarboxylic acid can be found in natural enniatin isolates (D-hydroxyisovaleric acid, D-Hiv). D-Hiv stems from L-valine deanimation by a valine aminotransferase to 2-keto-isovaleric acid (2-Kiv), which becomes subsequently reduced by a keto-isovaleric acid reductase (KivR) to D-Hiv. Peptide bond formation and N-methylation of the amino acid occur before three enzyme-bound dipeptidols are condensed to a hexapeptidol. This chain is Enniatin synthase, found in Fusarium equiseti (Fusarium scirpi).